The primary structure comprises 366 residues: MKFCAIFVLFIVLAINGYDCKIVQFIFGDSLSDVGNNKNLPRSLATANLPFYGIDFGNGLPNGRFTNGRTVSDIIGDKIGLPRPVAFLDPSMNEDVILENGVNYASGGGGILNETGGYFIQRFSLWKQIELFQGTQDVVVAKIGKKEADKFFQDARYVVALGSNDFINNYLMPVYSDSWKYNDQTFVDYLMETLESQLKVLHSLGARKLMVFGLGPMGCIPLQRALSLDGNCQNKASNLAKRFNKAATTMLLDLETKLPNASYRFGEAYDLVNDVITNPKKYGFDNSDSPCCSFYRIRPALTCIPASTLCKDRSKYVFWDEYHPTDKANELVANILIKRFDFMRADDGISHAPSPAPDISPSSDNN.

A signal peptide spans 1-20 (MKFCAIFVLFIVLAINGYDC). Residue Ser30 is the Nucleophile of the active site. 2 N-linked (GlcNAc...) asparagine glycosylation sites follow: Asn113 and Asn260. Catalysis depends on residues Asp320 and His323.

Belongs to the 'GDSL' lipolytic enzyme family.

The protein localises to the secreted. The protein is GDSL esterase/lipase At1g74460 of Arabidopsis thaliana (Mouse-ear cress).